The chain runs to 363 residues: Sorting nexin-21 (363 aa).

Positions 1 to 11 (MASRLLHRLRH) are enriched in basic residues. A disordered region spans residues 1 to 99 (MASRLLHRLR…PPPDGQRSSQ (99 aa)). Residues 12-28 (ALASDGPGEAAAGPEAE) are compositionally biased toward low complexity. Residues 46-56 (SRLSGTLSFTS) are compositionally biased toward polar residues. The segment covering 57–71 (AEDDPDDEDEDDEAG) has biased composition (acidic residues). The region spanning 119–236 (QRLLFEVTSA…DFFVLPELRR (118 aa)) is the PX domain. A 1,2-diacyl-sn-glycero-3-phospho-(1D-myo-inositol-3-phosphate) is bound by residues Arg-161, Ser-163, Lys-188, and Arg-202.

It belongs to the sorting nexin family. As to quaternary structure, monomer.

It localises to the cytoplasmic vesicle membrane. It is found in the early endosome membrane. Its function is as follows. Binds to membranes enriched in phosphatidylinositol 3-phosphate (PtdIns(P3)) and phosphatidylinositol 4,5-bisphosphate. May be involved in several stages of intracellular trafficking. In Mus musculus (Mouse), this protein is Sorting nexin-21.